The chain runs to 213 residues: Lactobacillus shifted protein (213 aa).

Residues 28 to 38 are compositionally biased toward polar residues; the sequence is PRFTENAMQPN. Disordered stretches follow at residues 28-56 and 182-213; these read PRFTENAMQPNDPTPRPAKPNVSETDATP and PTSSYPLEPTGAAEEVNENQRVTEGATGYEQR.

This is Lactobacillus shifted protein (lbsA) from Emericella nidulans (strain FGSC A4 / ATCC 38163 / CBS 112.46 / NRRL 194 / M139) (Aspergillus nidulans).